The sequence spans 510 residues: NAD(P)H-quinone oxidoreductase subunit 2 A, chloroplastic (510 aa).

The next 13 membrane-spanning stretches (helical) occupy residues 24–44, 59–79, 99–119, 124–144, 149–169, 183–203, 229–249, 295–315, 323–343, 347–367, 395–415, 418–438, and 484–504; these read LLLF…GLIL, WFYF…LFRW, IFQF…VEYI, MAIT…MFLC, LITI…LSGY, YLLM…WLYG, ISIA…PAPF, WHLL…LIAI, MLAY…IVGD, GYAS…GTFA, ALSS…AGFF, LHLF…IGLL, and MIVC…IIAI.

The protein belongs to the complex I subunit 2 family. As to quaternary structure, NDH is composed of at least 16 different subunits, 5 of which are encoded in the nucleus.

The protein localises to the plastid. It localises to the chloroplast thylakoid membrane. The catalysed reaction is a plastoquinone + NADH + (n+1) H(+)(in) = a plastoquinol + NAD(+) + n H(+)(out). It carries out the reaction a plastoquinone + NADPH + (n+1) H(+)(in) = a plastoquinol + NADP(+) + n H(+)(out). Its function is as follows. NDH shuttles electrons from NAD(P)H:plastoquinone, via FMN and iron-sulfur (Fe-S) centers, to quinones in the photosynthetic chain and possibly in a chloroplast respiratory chain. The immediate electron acceptor for the enzyme in this species is believed to be plastoquinone. Couples the redox reaction to proton translocation, and thus conserves the redox energy in a proton gradient. This chain is NAD(P)H-quinone oxidoreductase subunit 2 A, chloroplastic, found in Amborella trichopoda.